The sequence spans 382 residues: Lipid-A-disaccharide synthase (382 aa).

It belongs to the LpxB family.

The catalysed reaction is 2-N,3-O-bis[(3R)-3-hydroxytetradecanoyl]-alpha-D-glucosaminyl 1-phosphate + UDP-2-N,3-O-bis[(3R)-3-hydroxytetradecanoyl]-alpha-D-glucosamine = lipid A disaccharide (E. coli) + UDP + H(+). It carries out the reaction a lipid X + a UDP-2-N,3-O-bis[(3R)-3-hydroxyacyl]-alpha-D-glucosamine = a lipid A disaccharide + UDP + H(+). Its pathway is glycolipid biosynthesis; lipid IV(A) biosynthesis; lipid IV(A) from (3R)-3-hydroxytetradecanoyl-[acyl-carrier-protein] and UDP-N-acetyl-alpha-D-glucosamine: step 5/6. Its function is as follows. Condensation of UDP-2,3-diacylglucosamine and 2,3-diacylglucosamine-1-phosphate to form lipid A disaccharide, a precursor of lipid A, a phosphorylated glycolipid that anchors the lipopolysaccharide to the outer membrane of the cell. The chain is Lipid-A-disaccharide synthase from Enterobacter sp. (strain 638).